Here is a 485-residue protein sequence, read N- to C-terminus: UDP-N-acetylmuramoyl-L-alanyl-D-glutamate--2,6-diaminopimelate ligase (485 aa).

Ser30 serves as a coordination point for UDP-N-acetyl-alpha-D-muramoyl-L-alanyl-D-glutamate. 111-117 (GTNGKTT) is an ATP binding site. UDP-N-acetyl-alpha-D-muramoyl-L-alanyl-D-glutamate-binding positions include 153-154 (TT), Ser180, Gln186, and Arg188. Lys220 carries the N6-carboxylysine modification. Residues Arg378, 402 to 405 (DNPR), Gly455, and Glu459 each bind meso-2,6-diaminopimelate. The short motif at 402 to 405 (DNPR) is the Meso-diaminopimelate recognition motif element.

The protein belongs to the MurCDEF family. MurE subfamily. The cofactor is Mg(2+). Post-translationally, carboxylation is probably crucial for Mg(2+) binding and, consequently, for the gamma-phosphate positioning of ATP.

Its subcellular location is the cytoplasm. The enzyme catalyses UDP-N-acetyl-alpha-D-muramoyl-L-alanyl-D-glutamate + meso-2,6-diaminopimelate + ATP = UDP-N-acetyl-alpha-D-muramoyl-L-alanyl-gamma-D-glutamyl-meso-2,6-diaminopimelate + ADP + phosphate + H(+). Its pathway is cell wall biogenesis; peptidoglycan biosynthesis. Catalyzes the addition of meso-diaminopimelic acid to the nucleotide precursor UDP-N-acetylmuramoyl-L-alanyl-D-glutamate (UMAG) in the biosynthesis of bacterial cell-wall peptidoglycan. In Bacteroides fragilis (strain ATCC 25285 / DSM 2151 / CCUG 4856 / JCM 11019 / LMG 10263 / NCTC 9343 / Onslow / VPI 2553 / EN-2), this protein is UDP-N-acetylmuramoyl-L-alanyl-D-glutamate--2,6-diaminopimelate ligase.